The chain runs to 188 residues: Large ribosomal subunit protein eL18 (188 aa).

The segment at 147–188 is disordered; sequence EAEKHFGPAPGVPHSHTKPYVRSKGRKFERARGRRASRAYKN. 2 stretches are compositionally biased toward basic residues: residues 161–171 and 178–188; these read SHTKPYVRSKG and RGRRASRAYKN.

Belongs to the eukaryotic ribosomal protein eL18 family.

Its subcellular location is the cytoplasm. The polypeptide is Large ribosomal subunit protein eL18 (rpl-18) (Caenorhabditis elegans).